A 201-amino-acid chain; its full sequence is Protease (201 aa).

Catalysis depends on residues histidine 55, aspartate 72, and cysteine 122.

It belongs to the peptidase C5 family. In terms of assembly, interacts with protease cofactor pVI-C; this interaction is necessary for protease activation.

The protein localises to the virion. It localises to the host nucleus. The enzyme catalyses Cleaves proteins of the adenovirus and its host cell at two consensus sites: -Yaa-Xaa-Gly-Gly-|-Xaa- and -Yaa-Xaa-Gly-Xaa-|-Gly- (in which Yaa is Met, Ile or Leu, and Xaa is any amino acid).. Its activity is regulated as follows. Requires DNA and protease cofactor for maximal activation. Inside nascent virions, becomes partially activated by binding to the viral DNA, allowing it to cleave the cofactor that binds to the protease and fully activates it. Actin, like the viral protease cofactor, seems to act as a cofactor in the cleavage of cytokeratin 18 and of actin itself. Cleaves viral precursor proteins (pTP, pIIIa, pVI, pVII, pVIII, and pX) inside newly assembled particles giving rise to mature virions. Protease complexed to its cofactor slides along the viral DNA to specifically locate and cleave the viral precursors. Mature virions have a weakened organization compared to the unmature virions, thereby facilitating subsequent uncoating. Without maturation, the particle lacks infectivity and is unable to uncoat. Late in adenovirus infection, in the cytoplasm, may participate in the cytoskeleton destruction. Cleaves host cell cytoskeletal keratins K7 and K18. In Ovis aries (Sheep), this protein is Protease.